The following is a 209-amino-acid chain: Imidazole glycerol phosphate synthase subunit HisH (209 aa).

The Glutamine amidotransferase type-1 domain occupies 1 to 205; sequence MIAIIDYGMG…KGVVETWKSS (205 aa). C79 functions as the Nucleophile in the catalytic mechanism. Residues H180 and E182 contribute to the active site.

In terms of assembly, heterodimer of HisH and HisF.

The protein resides in the cytoplasm. The catalysed reaction is 5-[(5-phospho-1-deoxy-D-ribulos-1-ylimino)methylamino]-1-(5-phospho-beta-D-ribosyl)imidazole-4-carboxamide + L-glutamine = D-erythro-1-(imidazol-4-yl)glycerol 3-phosphate + 5-amino-1-(5-phospho-beta-D-ribosyl)imidazole-4-carboxamide + L-glutamate + H(+). The enzyme catalyses L-glutamine + H2O = L-glutamate + NH4(+). It participates in amino-acid biosynthesis; L-histidine biosynthesis; L-histidine from 5-phospho-alpha-D-ribose 1-diphosphate: step 5/9. Its function is as follows. IGPS catalyzes the conversion of PRFAR and glutamine to IGP, AICAR and glutamate. The HisH subunit catalyzes the hydrolysis of glutamine to glutamate and ammonia as part of the synthesis of IGP and AICAR. The resulting ammonia molecule is channeled to the active site of HisF. The protein is Imidazole glycerol phosphate synthase subunit HisH of Bacillus anthracis (strain A0248).